A 670-amino-acid polypeptide reads, in one-letter code: Oxidoreductase PigB (670 aa).

The signal sequence occupies residues 1 to 19; the sequence is MIIQRLFGILYMLAGLAKA. Helical transmembrane passes span 53 to 73, 76 to 96, 98 to 118, and 238 to 258; these read GDVINILVGVVLFGSGVILML, LWTTLVIYAQLLMMAVFVVIL, QSQPQVMLLDGVFALAALYML, and LVFFDTFLLLKCLGEIVVGFI.

Belongs to the flavin monoamine oxidase family. FAD serves as cofactor.

The protein resides in the membrane. The protein operates within antibiotic biosynthesis; prodigiosin biosynthesis. Its function is as follows. Involved in the biosynthesis of 2-methyl-3-n-amyl-pyrrole (MAP), one of the terminal products involved in the biosynthesis of the red antibiotic prodigiosin (Pig). Catalyzes the oxidation of dihydro form of MAP (H2MAP) to yield MAP. The sequence is that of Oxidoreductase PigB from Serratia sp. (strain ATCC 39006) (Prodigiosinella confusarubida).